Reading from the N-terminus, the 298-residue chain is Acetylglutamate kinase (298 aa).

Residues 69–70, Arg-91, and Asn-196 each bind substrate; that span reads GG.

This sequence belongs to the acetylglutamate kinase family. ArgB subfamily.

The protein localises to the cytoplasm. The catalysed reaction is N-acetyl-L-glutamate + ATP = N-acetyl-L-glutamyl 5-phosphate + ADP. It participates in amino-acid biosynthesis; L-arginine biosynthesis; N(2)-acetyl-L-ornithine from L-glutamate: step 2/4. In terms of biological role, catalyzes the ATP-dependent phosphorylation of N-acetyl-L-glutamate. The chain is Acetylglutamate kinase from Rhodopseudomonas palustris (strain TIE-1).